We begin with the raw amino-acid sequence, 348 residues long: Holliday junction branch migration complex subunit RuvB (348 aa).

The tract at residues 1-182 (MRIELLNTPA…FGINSRFDYY (182 aa)) is large ATPase domain (RuvB-L). ATP is bound by residues I21, R22, G63, K66, T67, T68, 129–131 (EDF), R172, Y182, and R219. Position 67 (T67) interacts with Mg(2+). The segment at 183–253 (SADLLEKIII…IAMTTLDCLE (71 aa)) is small ATPAse domain (RuvB-S). Residues 256–348 (EEGLDDMDKK…EFPLEDDQRQ (93 aa)) form a head domain (RuvB-H) region. DNA contacts are provided by R311 and R316.

This sequence belongs to the RuvB family. As to quaternary structure, homohexamer. Forms an RuvA(8)-RuvB(12)-Holliday junction (HJ) complex. HJ DNA is sandwiched between 2 RuvA tetramers; dsDNA enters through RuvA and exits via RuvB. An RuvB hexamer assembles on each DNA strand where it exits the tetramer. Each RuvB hexamer is contacted by two RuvA subunits (via domain III) on 2 adjacent RuvB subunits; this complex drives branch migration. In the full resolvosome a probable DNA-RuvA(4)-RuvB(12)-RuvC(2) complex forms which resolves the HJ.

The protein localises to the cytoplasm. It carries out the reaction ATP + H2O = ADP + phosphate + H(+). Functionally, the RuvA-RuvB-RuvC complex processes Holliday junction (HJ) DNA during genetic recombination and DNA repair, while the RuvA-RuvB complex plays an important role in the rescue of blocked DNA replication forks via replication fork reversal (RFR). RuvA specifically binds to HJ cruciform DNA, conferring on it an open structure. The RuvB hexamer acts as an ATP-dependent pump, pulling dsDNA into and through the RuvAB complex. RuvB forms 2 homohexamers on either side of HJ DNA bound by 1 or 2 RuvA tetramers; 4 subunits per hexamer contact DNA at a time. Coordinated motions by a converter formed by DNA-disengaged RuvB subunits stimulates ATP hydrolysis and nucleotide exchange. Immobilization of the converter enables RuvB to convert the ATP-contained energy into a lever motion, pulling 2 nucleotides of DNA out of the RuvA tetramer per ATP hydrolyzed, thus driving DNA branch migration. The RuvB motors rotate together with the DNA substrate, which together with the progressing nucleotide cycle form the mechanistic basis for DNA recombination by continuous HJ branch migration. Branch migration allows RuvC to scan DNA until it finds its consensus sequence, where it cleaves and resolves cruciform DNA. This is Holliday junction branch migration complex subunit RuvB from Chlorobium limicola (strain DSM 245 / NBRC 103803 / 6330).